We begin with the raw amino-acid sequence, 275 residues long: Bis(5'-nucleosyl)-tetraphosphatase, symmetrical (275 aa).

It belongs to the Ap4A hydrolase family.

It catalyses the reaction P(1),P(4)-bis(5'-adenosyl) tetraphosphate + H2O = 2 ADP + 2 H(+). In terms of biological role, hydrolyzes diadenosine 5',5'''-P1,P4-tetraphosphate to yield ADP. The chain is Bis(5'-nucleosyl)-tetraphosphatase, symmetrical (apaH) from Haemophilus influenzae (strain ATCC 51907 / DSM 11121 / KW20 / Rd).